The following is a 602-amino-acid chain: Arp2/3 complex-activating protein rickA (602 aa).

Disordered regions lie at residues 307–484 (SSLA…AGPK), 516–535 (VEFD…KPVQ), and 555–602 (MSDS…SFVK). The span at 318–442 (TPPPPLPGNN…IPPPPPPPMA (125 aa)) shows a compositional bias: pro residues. WH2 domains lie at 472-489 (DTSD…LRKV) and 499-516 (SRDL…LKKV). Basic and acidic residues predominate over residues 475–484 (DLMREIAGPK). Residues 537 to 570 (VNKLSGVASILARRVVMEMSDSSGSESDSGNWSD) form a central and acidic domains region. A compositionally biased stretch (low complexity) spans 555–566 (MSDSSGSESDSG). A compositionally biased stretch (basic residues) spans 578–590 (KTLKTKRERRKIL). Residues 591–602 (NNRNSQKPSFVK) are compositionally biased toward polar residues.

As to quaternary structure, homodimer.

It is found in the cell surface. In terms of biological role, recruits and activates the Arp2/3 complex, which in turn leads to actin polymerization, promoting Rickettsia motility during infection. This Rickettsia montanensis protein is Arp2/3 complex-activating protein rickA (rickA).